The following is a 208-amino-acid chain: Sodium/potassium-transporting ATPase subunit beta-1-interacting protein 4 (208 aa).

3 helical membrane passes run 35-55 (APILANFVHIIIVILGLFGTI), 62-82 (VMVYTLWAAVWVTWNVFIICF), and 151-171 (CLQILIALLGFVCGCQVVSVF).

The protein belongs to the NKAIN family. As to quaternary structure, interacts with ATP1B1.

It is found in the cell membrane. In Homo sapiens (Human), this protein is Sodium/potassium-transporting ATPase subunit beta-1-interacting protein 4 (NKAIN4).